A 703-amino-acid polypeptide reads, in one-letter code: uncharacterized protein (703 aa).

The next 4 membrane-spanning stretches (helical) occupy residues 23–43 (IAMSGAISAGAYSAGVFDFLI), 69–89 (ALSGASAGAITAAIGVIAAGG), 143–163 (PVISVLNANVLTAIGAEALEA), and 250–270 (PPEWLAFANAALASGAFPIGL). Residues 23–335 (IAMSGAISAG…INNDPFEFVR (313 aa)) form the PNPLA domain. Positions 72 to 76 (GASAG) match the GXSXG motif. Ser-74 functions as the Nucleophile in the catalytic mechanism. Asp-322 (proton acceptor) is an active-site residue. The DGA/G motif lies at 322 to 324 (DGG). Helical transmembrane passes span 357–377 (VIMIAPFPEGPPFLGDGEPPL), 432–452 (ETFSIASGLLGGFGGFVLEAF), and 644–664 (ILSTLAGAAGANCQVWLAPWT).

The protein localises to the cell membrane. This is an uncharacterized protein from Sinorhizobium fredii (strain NBRC 101917 / NGR234).